A 541-amino-acid polypeptide reads, in one-letter code: uncharacterized protein (541 aa).

5 helical membrane-spanning segments follow: residues 10 to 32 (LNNQ…KINI), 39 to 57 (SSAI…YTLP), 62 to 84 (TLGL…FFSL), 91 to 113 (LSLG…TYLF), and 146 to 168 (APAA…IQII). 2 RCK C-terminal domains span residues 183–260 (LNKE…DDLE) and 268–352 (TPVD…IFGN). 6 consecutive transmembrane segments (helical) span residues 357-375 (SYNF…GFIL), 385-407 (SGIF…SNIY), 428-447 (GLVL…ILAT), 452-474 (GLQL…VFIC), 481-500 (PFLS…PGLA), and 515-537 (YATV…IFIV).

It belongs to the AAE transporter (TC 2.A.81) family.

The protein localises to the cell membrane. This is an uncharacterized protein from Desulfotalea psychrophila (strain LSv54 / DSM 12343).